The sequence spans 255 residues: tRNA (guanine-N(1)-)-methyltransferase (255 aa).

Residues Gly-117 and 137–142 (IGDYVL) each bind S-adenosyl-L-methionine.

Belongs to the RNA methyltransferase TrmD family. As to quaternary structure, homodimer.

Its subcellular location is the cytoplasm. It carries out the reaction guanosine(37) in tRNA + S-adenosyl-L-methionine = N(1)-methylguanosine(37) in tRNA + S-adenosyl-L-homocysteine + H(+). Its function is as follows. Specifically methylates guanosine-37 in various tRNAs. This chain is tRNA (guanine-N(1)-)-methyltransferase, found in Chromobacterium violaceum (strain ATCC 12472 / DSM 30191 / JCM 1249 / CCUG 213 / NBRC 12614 / NCIMB 9131 / NCTC 9757 / MK).